A 268-amino-acid chain; its full sequence is Single-stranded DNA-binding protein WHY3, chloroplastic (268 aa).

The transit peptide at 1-75 (MSQLLSSPPM…KQRFGDSSSS (75 aa)) directs the protein to the chloroplast. The interval 93-98 (KGKAAL) is required for ssDNA binding. A Nuclear localization signal motif is present at residues 171–185 (KGKGSDEGKVRKVLK).

The protein belongs to the Whirly family. In terms of assembly, homotetramer.

Its subcellular location is the plastid. It is found in the chloroplast. The protein localises to the nucleus. Its function is as follows. Single-stranded DNA-binding protein that functions in both chloroplasts and nucleus. In chloroplasts, maintains plastid genome stability by preventing break-induced and short homology-dependent illegitimate recombinations. In the nucleus, is recruited to a distal element upstream of the kinesin KP1 to mediate the transcriptional repression of KP1. Can bind double-stranded DNA in vivo. The sequence is that of Single-stranded DNA-binding protein WHY3, chloroplastic (WHY3) from Arabidopsis thaliana (Mouse-ear cress).